We begin with the raw amino-acid sequence, 470 residues long: Transcriptional activator PmfR (470 aa).

In terms of assembly, forms oligomers in solution, probably homotetramers.

It participates in alkaloid degradation; nicotine degradation [regulation]. In terms of biological role, transcriptional regulator involved in the activation of the purU-mabO-folD-nepA-nepB and mao-ORF55-nbr operons implicated in the nicotine catabolic pathway. The sequence GTTT-14 bp-AAAC seems to be the core binding site of the regulator upstream of the -35 promoter region of the operon. This is Transcriptional activator PmfR (pmfR) from Paenarthrobacter nicotinovorans (Arthrobacter nicotinovorans).